A 254-amino-acid chain; its full sequence is Imidazole glycerol phosphate synthase subunit HisF (254 aa).

Catalysis depends on residues Asp-12 and Asp-131.

This sequence belongs to the HisA/HisF family. As to quaternary structure, heterodimer of HisH and HisF.

It is found in the cytoplasm. It catalyses the reaction 5-[(5-phospho-1-deoxy-D-ribulos-1-ylimino)methylamino]-1-(5-phospho-beta-D-ribosyl)imidazole-4-carboxamide + L-glutamine = D-erythro-1-(imidazol-4-yl)glycerol 3-phosphate + 5-amino-1-(5-phospho-beta-D-ribosyl)imidazole-4-carboxamide + L-glutamate + H(+). Its pathway is amino-acid biosynthesis; L-histidine biosynthesis; L-histidine from 5-phospho-alpha-D-ribose 1-diphosphate: step 5/9. Functionally, IGPS catalyzes the conversion of PRFAR and glutamine to IGP, AICAR and glutamate. The HisF subunit catalyzes the cyclization activity that produces IGP and AICAR from PRFAR using the ammonia provided by the HisH subunit. This chain is Imidazole glycerol phosphate synthase subunit HisF, found in Janthinobacterium sp. (strain Marseille) (Minibacterium massiliensis).